The primary structure comprises 338 residues: Ketol-acid reductoisomerase (NADP(+)) (338 aa).

Positions 1–181 (MKVYYDKDAD…GGTRGGVIET (181 aa)) constitute a KARI N-terminal Rossmann domain. Residues 24–27 (YGSQ), arginine 47, and serine 52 contribute to the NADP(+) site. The active site involves histidine 107. An NADP(+)-binding site is contributed by glycine 133. Residues 182–327 (TFKEETETDL…SRLRDMMPWI (146 aa)) form the KARI C-terminal knotted domain. The Mg(2+) site is built by aspartate 190, glutamate 194, glutamate 226, and glutamate 230. Substrate is bound at residue serine 251.

The protein belongs to the ketol-acid reductoisomerase family. Mg(2+) is required as a cofactor.

The enzyme catalyses (2R)-2,3-dihydroxy-3-methylbutanoate + NADP(+) = (2S)-2-acetolactate + NADPH + H(+). It catalyses the reaction (2R,3R)-2,3-dihydroxy-3-methylpentanoate + NADP(+) = (S)-2-ethyl-2-hydroxy-3-oxobutanoate + NADPH + H(+). It functions in the pathway amino-acid biosynthesis; L-isoleucine biosynthesis; L-isoleucine from 2-oxobutanoate: step 2/4. The protein operates within amino-acid biosynthesis; L-valine biosynthesis; L-valine from pyruvate: step 2/4. Involved in the biosynthesis of branched-chain amino acids (BCAA). Catalyzes an alkyl-migration followed by a ketol-acid reduction of (S)-2-acetolactate (S2AL) to yield (R)-2,3-dihydroxy-isovalerate. In the isomerase reaction, S2AL is rearranged via a Mg-dependent methyl migration to produce 3-hydroxy-3-methyl-2-ketobutyrate (HMKB). In the reductase reaction, this 2-ketoacid undergoes a metal-dependent reduction by NADPH to yield (R)-2,3-dihydroxy-isovalerate. The protein is Ketol-acid reductoisomerase (NADP(+)) of Nitrosomonas eutropha (strain DSM 101675 / C91 / Nm57).